Here is a 1845-residue protein sequence, read N- to C-terminus: Proteasome adapter and scaffold protein ECM29 (1845 aa).

N-acetylalanine is present on alanine 2. HEAT repeat units follow at residues 28-65 (TDEQ…LVHL), 107-144 (YPRL…LIPT), 162-205 (NLAE…QGSS), 326-362 (RDPV…YDGL), 387-426 (PEIK…VGKL), 429-466 (RMPH…LSMM), 469-507 (AYST…ASTV), 683-720 (YPEK…YSVV), 721-759 (VSTV…LGFT), 783-820 (TLPD…LGEI), 829-868 (PSEG…LGYF), 870-907 (VGDG…ITSA), 931-969 (AGAK…LLSL), 975-1012 (THKE…LGLV), 1013-1050 (YELG…VVFQ), 1112-1149 (AGEQ…WNAL), 1152-1189 (DKSM…LNDL), 1194-1231 (PLDD…LKTL), 1243-1281 (KGAA…LVKI), 1285-1323 (AGAM…TEQE), 1348-1386 (LQYL…IVSL), 1390-1427 (CPQD…MGHL), 1517-1554 (SFGG…MASI), 1558-1595 (TSSL…IACV), 1605-1642 (KSVP…AADI), 1646-1683 (TKED…ENEK), and 1779-1822 (TYSS…LATM). Low complexity predominate over residues 193–207 (QSRQNSSSAQGSSSN). Residues 193–217 (QSRQNSSSAQGSSSNSGGGSGIPQP) form a disordered region. Phosphoserine is present on serine 830. Threonine 836 is subject to Phosphothreonine. A Glycyl lysine isopeptide (Lys-Gly) (interchain with G-Cter in SUMO1) cross-link involves residue lysine 1039.

The protein belongs to the ECM29 family. In terms of assembly, non-stoichiometric component of the proteasome; associates with the 26S proteasome. Interacts (via N-terminus) with VPS11, VPS26A, VPS36, RAB11FIP4 and RABEP1. Interacts (via C-terminus) with DCTN1, DCTN2, KIF5B, MYH7, MYH10, MYO10 and ARF6.

It is found in the endoplasmic reticulum. It localises to the endoplasmic reticulum-Golgi intermediate compartment. The protein resides in the endosome. Its subcellular location is the cytoplasm. The protein localises to the cytoskeleton. It is found in the microtubule organizing center. It localises to the centrosome. The protein resides in the nucleus. Its subcellular location is the multivesicular body. The protein localises to the cytoplasmic vesicle. Its function is as follows. Adapter/scaffolding protein that binds to the 26S proteasome, motor proteins and other compartment specific proteins. May couple the proteasome to different compartments including endosome, endoplasmic reticulum and centrosome. May play a role in ERAD and other enhanced proteolysis. Promotes proteasome dissociation under oxidative stress. This is Proteasome adapter and scaffold protein ECM29 from Homo sapiens (Human).